We begin with the raw amino-acid sequence, 175 residues long: Endoribonuclease YbeY (175 aa).

H121, H125, and H131 together coordinate Zn(2+). The tract at residues 154-175 (PDPYSPAQQESQAQPENTELNP) is disordered. Polar residues predominate over residues 159-175 (PAQQESQAQPENTELNP).

Belongs to the endoribonuclease YbeY family. Zn(2+) serves as cofactor.

It is found in the cytoplasm. In terms of biological role, single strand-specific metallo-endoribonuclease involved in late-stage 70S ribosome quality control and in maturation of the 3' terminus of the 16S rRNA. In Alcanivorax borkumensis (strain ATCC 700651 / DSM 11573 / NCIMB 13689 / SK2), this protein is Endoribonuclease YbeY.